Here is a 171-residue protein sequence, read N- to C-terminus: AN1-type zinc finger protein 2A (171 aa).

AN1-type zinc fingers lie at residues 4 to 52 (PDLG…KKDV) and 94 to 142 (KVFT…SSAS). Cysteine 10, cysteine 15, cysteine 25, cysteine 28, cysteine 33, histidine 36, histidine 42, cysteine 44, cysteine 100, cysteine 105, cysteine 115, cysteine 118, cysteine 123, histidine 126, histidine 132, and cysteine 134 together coordinate Zn(2+). The disordered stretch occupies residues 134–171 (CQAGSSSASRGRTSTSRAAEQKPSGVSWLAQRLRRTVK). Residues 136–151 (AGSSSASRGRTSTSRA) are compositionally biased toward low complexity.

It is found in the cytoplasm. The protein resides in the nucleus. This chain is AN1-type zinc finger protein 2A (Zfand2a), found in Mus musculus (Mouse).